We begin with the raw amino-acid sequence, 257 residues long: Phosphonates import ATP-binding protein PhnC (257 aa).

An ABC transporter domain is found at 2–246; it reads IEFRNVSKVY…KFAEIYGDVA (245 aa). 35-42 contacts ATP; sequence GLSGAGKS.

The protein belongs to the ABC transporter superfamily. Phosphonates importer (TC 3.A.1.9.1) family. In terms of assembly, the complex is composed of two ATP-binding proteins (PhnC), two transmembrane proteins (PhnE) and a solute-binding protein (PhnD).

It is found in the cell membrane. It carries out the reaction phosphonate(out) + ATP + H2O = phosphonate(in) + ADP + phosphate + H(+). Functionally, part of the ABC transporter complex PhnCDE involved in phosphonates import. Responsible for energy coupling to the transport system. This chain is Phosphonates import ATP-binding protein PhnC, found in Bacillus cereus (strain ZK / E33L).